The following is a 1590-amino-acid chain: Defective chorion protein, FC177 isoform (1590 aa).

Positions 1–19 are cleaved as a signal peptide; that stretch reads MRLFSLLPLLALLVVQAAG. Disordered regions lie at residues 23–60, 184–212, and 268–294; these read VTSD…PSIN, APAP…PDAP, and PAQP…EDPY. Residues 32–41 are compositionally biased toward polar residues; that stretch reads AGSTTNSTTD. Positions 268–280 are enriched in low complexity; it reads PAQPAAAGTDAQA. 5 consecutive repeat copies span residues 493-518, 519-544, 545-570, 571-596, and 597-622. The interval 493-788 is 12 X 26 AA approximate tandem repeats, Glu, Met-rich; that stretch reads QNPMMMQQRQ…IQQQQRQMMQ (296 aa). One copy of the 6; approximate repeat lies at 623 to 652; that stretch reads QNPMMMQQRQWSEEQAKIQHDQQMAQQMAQ. Residues 653–680 form a 7; approximate repeat; the sequence is QGLMMTEQRQRQWSEDQAKIQQAQQMAQ. An 8; approximate repeat occupies 681 to 696; sequence QTPMMMPQMQQRQWTE. The 9; approximate repeat unit spans residues 697-720; sequence DPQMVQQMQQRQWAEDQTRMQMAQ. Residues 721–733 form a 10; approximate repeat; it reads QNPMMQQQRQMAE. One copy of the 11; approximate repeat lies at 734–758; that stretch reads NPQMMQQRQWSEEQTKIEQAQQMAQ. A 12; approximate repeat occupies 759–788; that stretch reads QNQMMMQQMQQRQWSEDQAQIQQQQRQMMQ. 6 disordered regions span residues 843 to 875, 944 to 983, 1119 to 1221, 1261 to 1352, 1375 to 1515, and 1538 to 1590; these read GPQM…SKSA, RTIN…EHRV, EEDA…TKSI, PVTE…DDNN, FAQG…QATV, and EKKS…QTKA. Residues 957-977 show a composition bias toward polar residues; that stretch reads SESQKSNSNPPTTLTPAPQEQ. The segment covering 1119 to 1130 has biased composition (acidic residues); that stretch reads EEDAQQEPMEEE. The span at 1131–1148 shows a compositional bias: basic and acidic residues; it reads QLQHDPNTEPQYNHKDFV. Residues 1151–1195 are compositionally biased toward low complexity; that stretch reads TTSTASPITSTTEAATPTGSDSTSEATVTPEVTTTTSTSTTTTTE. Polar residues predominate over residues 1205-1221; sequence QQDSQAEAESSHVTKSI. The span at 1272–1288 shows a compositional bias: basic and acidic residues; the sequence is EPSKQEDKPKVEEKVIA. The segment covering 1295-1306 has biased composition (acidic residues); the sequence is EQEEELEEDEDS. 2 stretches are compositionally biased toward low complexity: residues 1307-1319 and 1435-1452; these read TSIS…PSPS and DSGS…TPSP. Over residues 1493 to 1504 the composition is skewed to basic residues; sequence QRPKKSMSKPKK. Residues 1505 to 1515 are compositionally biased toward low complexity; sequence QSSQVTTQATV. Residues 1554–1576 are compositionally biased toward basic residues; sequence TKPKSIKPVKVIKRKRLRRRQHK. Polar residues predominate over residues 1577-1590; it reads SIATTIRSPIQTKA.

The protein localises to the secreted. In terms of biological role, required for proper assembly of the eggshell. The protein is Defective chorion protein, FC177 isoform of Drosophila melanogaster (Fruit fly).